We begin with the raw amino-acid sequence, 507 residues long: Eukaryotic translation initiation factor 4E-binding protein Mextli homolog (507 aa).

The interval 126–163 (RPEGQHDPAPTVGIPPSATSPPTQVTSSVTSPVPSSPQ) is disordered. Low complexity predominate over residues 140–158 (PPSATSPPTQVTSSVTSPV). The 66-residue stretch at 242 to 307 (QLRHEMIIRN…EDIERAKDMI (66 aa)) folds into the KH domain. 2 disordered regions span residues 314-360 (NMSP…DEDI) and 395-424 (ARPSAEEREKKKERRKSMPLQQTARDQQEP). Residues 329–348 (QYSGMSSENQSIPSQQNTAN) show a composition bias toward polar residues. The span at 349 to 360 (IDEDDDDDDEDI) shows a compositional bias: acidic residues.

Interacts with eukaryotic translation initiation factor ife-3.

It localises to the cytoplasm. Functionally, plays a role in promoting translation. The protein is Eukaryotic translation initiation factor 4E-binding protein Mextli homolog of Caenorhabditis elegans.